We begin with the raw amino-acid sequence, 837 residues long: Translation initiation factor IF-2 (837 aa).

The segment at 94-253 is disordered; it reads KRSPDEIEAE…QHGFQNPTGP (160 aa). A compositionally biased stretch (basic and acidic residues) spans 95–148; that stretch reads RSPDEIEAERQRELEEQRAAEEAERLKAEEAAARQRAEEEARKAEEAARAKAAE. The span at 149 to 171 shows a compositional bias: low complexity; it reads EAVSAQPAAAVEVAAAEPVAKPA. Composition is skewed to basic and acidic residues over residues 172-188 and 220-229; these read AAEE…PKRD and STDEESDGYR. A compositionally biased stretch (basic residues) spans 230-244; that stretch reads RGGRGGKSKLKKRNQ. Residues 337 to 506 form the tr-type G domain; that stretch reads TRAPVVTVMG…LLQAEVLELK (170 aa). Residues 346 to 353 form a G1 region; it reads GHVDHGKT. 346-353 is a GTP binding site; that stretch reads GHVDHGKT. The segment at 371-375 is G2; sequence GITQH. The segment at 392-395 is G3; that stretch reads DTPG. GTP contacts are provided by residues 392–396 and 446–449; these read DTPGH and NKID. Positions 446-449 are G4; that stretch reads NKID. The tract at residues 482-484 is G5; sequence SAK.

The protein belongs to the TRAFAC class translation factor GTPase superfamily. Classic translation factor GTPase family. IF-2 subfamily.

It is found in the cytoplasm. Functionally, one of the essential components for the initiation of protein synthesis. Protects formylmethionyl-tRNA from spontaneous hydrolysis and promotes its binding to the 30S ribosomal subunits. Also involved in the hydrolysis of GTP during the formation of the 70S ribosomal complex. This is Translation initiation factor IF-2 from Pseudomonas paraeruginosa (strain DSM 24068 / PA7) (Pseudomonas aeruginosa (strain PA7)).